A 339-amino-acid chain; its full sequence is Ketol-acid reductoisomerase (NADP(+)) (339 aa).

Residues 1 to 182 enclose the KARI N-terminal Rossmann domain; sequence MRVYYDRDAD…GGGRAGIIET (182 aa). NADP(+)-binding positions include 24–27, Arg48, Ser51, Thr53, and 83–86; these read YGSQ and DELQ. Residue His108 is part of the active site. Residue Gly134 participates in NADP(+) binding. The KARI C-terminal knotted domain occupies 183-328; that stretch reads SFKEECETDL…AKLREMMPWI (146 aa). Residues Asp191, Glu195, Glu227, and Glu231 each coordinate Mg(2+). Residue Ser252 coordinates substrate.

This sequence belongs to the ketol-acid reductoisomerase family. Mg(2+) serves as cofactor.

The catalysed reaction is (2R)-2,3-dihydroxy-3-methylbutanoate + NADP(+) = (2S)-2-acetolactate + NADPH + H(+). It carries out the reaction (2R,3R)-2,3-dihydroxy-3-methylpentanoate + NADP(+) = (S)-2-ethyl-2-hydroxy-3-oxobutanoate + NADPH + H(+). The protein operates within amino-acid biosynthesis; L-isoleucine biosynthesis; L-isoleucine from 2-oxobutanoate: step 2/4. It participates in amino-acid biosynthesis; L-valine biosynthesis; L-valine from pyruvate: step 2/4. Functionally, involved in the biosynthesis of branched-chain amino acids (BCAA). Catalyzes an alkyl-migration followed by a ketol-acid reduction of (S)-2-acetolactate (S2AL) to yield (R)-2,3-dihydroxy-isovalerate. In the isomerase reaction, S2AL is rearranged via a Mg-dependent methyl migration to produce 3-hydroxy-3-methyl-2-ketobutyrate (HMKB). In the reductase reaction, this 2-ketoacid undergoes a metal-dependent reduction by NADPH to yield (R)-2,3-dihydroxy-isovalerate. The sequence is that of Ketol-acid reductoisomerase (NADP(+)) from Rhodopseudomonas palustris (strain BisB5).